The following is a 683-amino-acid chain: Synaptic vesicle glycoprotein 2B (683 aa).

Residues 1–10 (MDDYRYRDNY) show a composition bias toward basic and acidic residues. The tract at residues 1 to 73 (MDDYRYRDNY…TKMAPSRADG (73 aa)) is disordered. Topologically, residues 1–110 (MDDYRYRDNY…ECGHGRFQWT (110 aa)) are cytoplasmic. Phosphoserine is present on serine 33. At threonine 36 the chain carries Phosphothreonine. The helical transmembrane segment at 111–131 (LFFVLGLALMADGVEIFVVSF) threads the bilayer. The Extracellular portion of the chain corresponds to 132 to 148 (ALPSAEKDMCLSSSKKG). The helical transmembrane segment at 149–169 (MLGLIVYLGMMAGAFILGGLA) threads the bilayer. The Cytoplasmic portion of the chain corresponds to 170 to 182 (DKLGRKKVLSMSL). The helical transmembrane segment at 183–203 (AINASFASLSSFVQGYGAFLF) threads the bilayer. The Extracellular segment spans residues 204–205 (CR). The chain crosses the membrane as a helical span at residues 206-226 (LISGIGIGGSLPIVFAYFSEF). The Cytoplasmic segment spans residues 227 to 237 (LSREKRGEHLS). A helical membrane pass occupies residues 238–258 (WLGIFWMTGGIYASAMAWSII). Residues 259–277 (PHYGWGFSMGTNYHFHSWR) are Extracellular-facing. A helical membrane pass occupies residues 278-298 (VFVIVCALPATVSMVALKFMP). Residues 299-390 (ESPRFLLEMG…CVMGPYRMNT (92 aa)) lie on the Cytoplasmic side of the membrane. The helical transmembrane segment at 391–411 (LILAVVWFTMALSYYGLTVWF) threads the bilayer. The Extracellular segment spans residues 412–535 (PDMIRYFQDE…CHMDFEEDND (124 aa)). Position 423 is a phosphotyrosine (tyrosine 423). N-linked (GlcNAc...) asparagine glycans are attached at residues asparagine 441, asparagine 491, and asparagine 516. Residues 536–556 (FLIYLVSFLGSLSVLPGNIIS) traverse the membrane as a helical segment. Over 557–565 (ALLMDRIGR) the chain is Cytoplasmic. Residues 566–586 (LKMIGGSMLISAVCCFFLFFG) traverse the membrane as a helical segment. Residues 587 to 592 (NSESAM) are Extracellular-facing. The chain crosses the membrane as a helical span at residues 593-613 (IGWQCLFCGTSIAAWNALDVI). The Cytoplasmic portion of the chain corresponds to 614 to 626 (TVELYPTNQRATA). Residues 627–649 (FGILNGLCKFGAILGNTIFASFV) traverse the membrane as a helical segment. Residues 650–653 (GITK) lie on the Extracellular side of the membrane. The helical transmembrane segment at 654 to 672 (VVPILLAAASLVGGGLIAL) threads the bilayer. Over 673–683 (RLPETREQVLM) the chain is Cytoplasmic.

The protein belongs to the major facilitator superfamily. As to quaternary structure, interacts with SYT1 in a calcium-independent manner. Forms a complex with SYT1, syntaxin-1 and SNAP25. In terms of assembly, (Microbial infection) Interacts with C.botulinum neurotoxin type A (BoNT/A, botA). (Microbial infection) Interacts with C.botulinum neurotoxin type D (BoNT/D, botD). No evidence for its interaction with BoNT/D has also been published. In terms of processing, N-glycosylated. Post-translationally, the N-terminal cytoplasmic domain is phosphorylated by CK1. In terms of tissue distribution, expressed in ribbon synapses of the retina (at protein level). Expressed in diaphragm motor nerve terminals (at protein level). Expressed in hippocampus neurons (at protein level).

Its subcellular location is the cytoplasmic vesicle. The protein localises to the secretory vesicle. It is found in the synaptic vesicle membrane. It localises to the acrosome. Functionally, probably plays a role in the control of regulated secretion in neural and endocrine cells. Its function is as follows. (Microbial infection) Receptor for C.botulinum neurotoxin type A (BoNT/A, botA); the toxin probably binds via extracellular loop 4. In terms of biological role, (Microbial infection) Possible receptor for C.botulinum neurotoxin type D (BoNT/D, botD). Not a receptor for C.botulinum neurotoxin type D (BoNT/D, botD). (Microbial infection) Receptor for C.botulinum neurotoxin type E (BoNT/E); the toxin probably binds via extracellular loop 4. It probably requires glycosylation of Asn-516. The polypeptide is Synaptic vesicle glycoprotein 2B (Sv2b) (Mus musculus (Mouse)).